Consider the following 335-residue polypeptide: Glyceraldehyde-3-phosphate dehydrogenase (335 aa).

NAD(+) contacts are provided by residues 12-13 (RI), aspartate 36, arginine 80, and serine 122. D-glyceraldehyde 3-phosphate contacts are provided by residues 152 to 154 (SCT), threonine 183, arginine 198, 211 to 212 (TG), and arginine 234. Cysteine 153 acts as the Nucleophile in catalysis. NAD(+) is bound at residue asparagine 316.

This sequence belongs to the glyceraldehyde-3-phosphate dehydrogenase family. As to quaternary structure, homotetramer.

Its subcellular location is the cytoplasm. It catalyses the reaction D-glyceraldehyde 3-phosphate + phosphate + NAD(+) = (2R)-3-phospho-glyceroyl phosphate + NADH + H(+). Its pathway is carbohydrate degradation; glycolysis; pyruvate from D-glyceraldehyde 3-phosphate: step 1/5. In terms of biological role, catalyzes the oxidative phosphorylation of glyceraldehyde 3-phosphate (G3P) to 1,3-bisphosphoglycerate (BPG) using the cofactor NAD. The first reaction step involves the formation of a hemiacetal intermediate between G3P and a cysteine residue, and this hemiacetal intermediate is then oxidized to a thioester, with concomitant reduction of NAD to NADH. The reduced NADH is then exchanged with the second NAD, and the thioester is attacked by a nucleophilic inorganic phosphate to produce BPG. This is Glyceraldehyde-3-phosphate dehydrogenase (gap) from Xanthobacter flavus.